Here is a 445-residue protein sequence, read N- to C-terminus: Glutamate--tRNA ligase 2 (445 aa).

The 'HIGH' region motif lies at 10–20 (PSPTGMLHVGN). Positions 240–244 (KISKR) match the 'KMSKS' region motif. ATP is bound at residue lysine 243.

This sequence belongs to the class-I aminoacyl-tRNA synthetase family. Glutamate--tRNA ligase type 1 subfamily. As to quaternary structure, monomer.

The protein resides in the cytoplasm. The catalysed reaction is tRNA(Glu) + L-glutamate + ATP = L-glutamyl-tRNA(Glu) + AMP + diphosphate. Its function is as follows. Catalyzes the attachment of glutamate to tRNA(Glu) in a two-step reaction: glutamate is first activated by ATP to form Glu-AMP and then transferred to the acceptor end of tRNA(Glu). The protein is Glutamate--tRNA ligase 2 of Rickettsia canadensis (strain McKiel).